The chain runs to 151 residues: Large ribosomal subunit protein uL22 (151 aa).

Belongs to the universal ribosomal protein uL22 family. As to quaternary structure, part of the 50S ribosomal subunit.

This protein binds specifically to 23S rRNA. It makes multiple contacts with different domains of the 23S rRNA in the assembled 50S subunit and ribosome. Functionally, the globular domain of the protein is located near the polypeptide exit tunnel on the outside of the subunit, while an extended beta-hairpin is found that lines the wall of the exit tunnel in the center of the 70S ribosome. The sequence is that of Large ribosomal subunit protein uL22 from Methanococcoides burtonii (strain DSM 6242 / NBRC 107633 / OCM 468 / ACE-M).